Here is a 64-residue protein sequence, read N- to C-terminus: Translation machinery-associated protein 7 (64 aa).

Disordered regions lie at residues 1 to 38 (MSSR…ADAA) and 45 to 64 (ANMK…SGKK). Residues 27–38 (IAFKEKQKADAA) show a composition bias toward basic and acidic residues. Gly residues predominate over residues 53 to 64 (LVGGGIKKSGKK).

It belongs to the TMA7 family. Interacts with the 40S ribosomal subunit.

Its subcellular location is the cytoplasm. The protein resides in the nucleus. Its function is as follows. Involved in protein synthesis. This Saccharomyces cerevisiae (strain ATCC 204508 / S288c) (Baker's yeast) protein is Translation machinery-associated protein 7 (TMA7).